A 319-amino-acid polypeptide reads, in one-letter code: Protein SICKLE (319 aa).

Disordered regions lie at residues 1 to 59, 71 to 239, and 262 to 299; these read MEDS…TQRF, SFKK…PGAE, and CSDA…SNQQ. Polar residues-rich tracts occupy residues 27 to 56 and 78 to 88; these read TTGT…SFET and PKQQYISSPSH. A compositionally biased stretch (pro residues) spans 93 to 103; the sequence is PVPPQFPPSVP. Over residues 185–210 the composition is skewed to polar residues; sequence SYNNTPPQFSNYGRQNANWGGNTYPN. Residues 228–238 are compositionally biased toward basic and acidic residues; the sequence is DGGRRPMEPGA. The span at 285 to 299 shows a compositional bias: polar residues; the sequence is SVTSEATHKTSSNQQ.

In terms of assembly, interacts with ubiquitin thioesterases UBP12 and UBP13, and with protein phosphatase 2A subunits PP2AB1, PP2AB2, PP2A3, PP2A4, PP2AA1 and PP2AA2. Expressed in the shoot apical meristem (SAM), embryos, seedlings, root tips, and root and leaf primordia.

Its subcellular location is the nucleus. The protein resides in the cytoplasm. The protein localises to the cytosol. Its function is as follows. Involved in miRNAs and siRNAs biogenesis and thus promotes gene silencing. Modulates auxin (IAA) transport-related developmental programs by regulating protein phosphatase 2A (PP2As)-driven auxin efflux carrier PIN proteins recycling and polarity. Required during development. Necessary for abiotic stress (e.g. chilling and salt) tolerance. This is Protein SICKLE from Arabidopsis thaliana (Mouse-ear cress).